A 196-amino-acid polypeptide reads, in one-letter code: Small heat shock protein C3 (196 aa).

A sHSP domain is found at 88–196 (SAYSSSAIRT…EKDAKEIPIQ (109 aa)).

The protein belongs to the small heat shock protein (HSP20) family.

The polypeptide is Small heat shock protein C3 (hspc3-1) (Rickettsia felis (strain ATCC VR-1525 / URRWXCal2) (Rickettsia azadi)).